A 338-amino-acid polypeptide reads, in one-letter code: Lipoate-protein ligase A (338 aa).

The BPL/LPL catalytic domain maps to 29–216; sequence PTTQRVLFLW…AFFDYFGEQC (188 aa). ATP-binding positions include Arg71, 76–79, and Lys134; that span reads GAVF. Residue Lys134 participates in (R)-lipoate binding.

It belongs to the LplA family. Monomer.

It localises to the cytoplasm. The enzyme catalyses L-lysyl-[lipoyl-carrier protein] + (R)-lipoate + ATP = N(6)-[(R)-lipoyl]-L-lysyl-[lipoyl-carrier protein] + AMP + diphosphate + H(+). It participates in protein modification; protein lipoylation via exogenous pathway; protein N(6)-(lipoyl)lysine from lipoate: step 1/2. Its pathway is protein modification; protein lipoylation via exogenous pathway; protein N(6)-(lipoyl)lysine from lipoate: step 2/2. Functionally, catalyzes both the ATP-dependent activation of exogenously supplied lipoate to lipoyl-AMP and the transfer of the activated lipoyl onto the lipoyl domains of lipoate-dependent enzymes. This Pectobacterium carotovorum subsp. carotovorum (strain PC1) protein is Lipoate-protein ligase A.